A 487-amino-acid chain; its full sequence is UDP-N-acetylmuramate--L-alanine ligase (487 aa).

126–132 provides a ligand contact to ATP; the sequence is GTHGKTT.

This sequence belongs to the MurCDEF family.

It localises to the cytoplasm. The enzyme catalyses UDP-N-acetyl-alpha-D-muramate + L-alanine + ATP = UDP-N-acetyl-alpha-D-muramoyl-L-alanine + ADP + phosphate + H(+). It functions in the pathway cell wall biogenesis; peptidoglycan biosynthesis. In terms of biological role, cell wall formation. This Psychromonas ingrahamii (strain DSM 17664 / CCUG 51855 / 37) protein is UDP-N-acetylmuramate--L-alanine ligase.